Consider the following 110-residue polypeptide: UPF0367 protein Syncc9605_2376 (110 aa).

The protein belongs to the UPF0367 family.

The chain is UPF0367 protein Syncc9605_2376 from Synechococcus sp. (strain CC9605).